Here is a 402-residue protein sequence, read N- to C-terminus: MAPTTTMGSALYPLGEMRRSQRADGLAAVLAIGTANPPNCVTQEEFPDFYFRVTNSDHLTALKDKFKRICQEMGVQRRYLHHTEEMLSAHPEFVDRDAPSLDARLDIAADAVPELAAEAAKKAIAEWGRPAADITHLVVTTNSGAHVPGVDFRLVPLLGLRPSVRRTMLHLNGCFAGCAALRLAKDLAENSRGARVLVVAAELTLMYFTGPDEGCFRTLLVQGLFGDGAAAVIVGADADDVERPLFEIVSAAQTIIPESDHALNMRFTERRLDGVLGRQVPGLIGDNVERCLLDMFGPLLGGDGGGGWNDLFWAVHPGSSTIMDQVDAALGLEPGKLAASRRVLSDYGNMSGATVIFALDELRRQRKEAAAAGEWPELGVMMAFGPGMTVDAMLLHATSHVN.

Cys-174 (acyl-thioester intermediate) is an active-site residue.

This sequence belongs to the thiolase-like superfamily. Chalcone/stilbene synthases family. In terms of assembly, homodimer.

It catalyses the reaction 2 4-coumaroyl-CoA + malonyl-CoA + H2O + H(+) = bisdemethoxycurcumin + 2 CO2 + 3 CoA. It functions in the pathway secondary metabolite biosynthesis; flavonoid biosynthesis. Its function is as follows. Plant-specific type III polyketide synthase (PKS) that catalyzes the one-pot formation of the C6-C7-C6 diarylheptanoid scaffold of bisdemethoxycurcumin by the condensation of two molecules of 4-coumaroyl-CoA and one molecule of malonyl-CoA. This is Bisdemethoxycurcumin synthase from Oryza sativa subsp. japonica (Rice).